A 490-amino-acid polypeptide reads, in one-letter code: Protein U94 (490 aa).

The region spanning 1–210 (MFSIINPSDD…SHFNKKPNVK (210 aa)) is the PV NS1-Nuc domain. Positions 312–463 (DPILAGTILY…IPRNFPVIQK (152 aa)) constitute an SF3 helicase domain. 338–345 (GPPGCGKS) lines the ATP pocket.

The protein resides in the host nucleus. This is Protein U94 (U94) from Human herpesvirus 6B (HHV-6 variant B).